Here is a 146-residue protein sequence, read N- to C-terminus: Anti-sigma F factor (146 aa).

It belongs to the anti-sigma-factor family.

It carries out the reaction L-seryl-[protein] + ATP = O-phospho-L-seryl-[protein] + ADP + H(+). The catalysed reaction is L-threonyl-[protein] + ATP = O-phospho-L-threonyl-[protein] + ADP + H(+). Functionally, binds to sigma F and blocks its ability to form an RNA polymerase holoenzyme (E-sigma F). Phosphorylates SpoIIAA on a serine residue. This phosphorylation may enable SpoIIAA to act as an anti-anti-sigma factor that counteracts SpoIIAB and thus releases sigma F from inhibition. The sequence is that of Anti-sigma F factor from Shouchella clausii (strain KSM-K16) (Alkalihalobacillus clausii).